The primary structure comprises 124 residues: Probable S-adenosyl-L-methionine-binding protein VNG_1115H (124 aa).

In terms of domain architecture, TsaA-like spans 3 to 124; the sequence is ATPIGYADTR…PVLDLKPALD (122 aa). S-adenosyl-L-methionine contacts are provided by residues 20–22, 58–59, R78, and 111–114; these read PRQ, DD, and AHGS.

Belongs to the tRNA methyltransferase O family.

The chain is Probable S-adenosyl-L-methionine-binding protein VNG_1115H from Halobacterium salinarum (strain ATCC 700922 / JCM 11081 / NRC-1) (Halobacterium halobium).